A 2543-amino-acid polypeptide reads, in one-letter code: Zinc finger FYVE domain-containing protein 26 (2543 aa).

S297 bears the Phosphoserine mark. 4 disordered regions span residues 523-545 (ECRDSPSEDPALAAEPANDSLSS), 609-636 (GLLGLRSPSESPQHIAQPERKSEQGCQE), 699-722 (LSSHSPPEKPKLPEGQSCSGSRDG), and 744-820 (VTSN…GRLQ). Phosphoserine is present on residues S615, S619, and S703. A compositionally biased stretch (basic and acidic residues) spans 699–710 (LSSHSPPEKPKL). A compositionally biased stretch (basic residues) spans 767-776 (SLRRGRRTRR). The segment covering 786-806 (SNPSLESTSSELSTSTSEGSL) has biased composition (low complexity). S802 carries the phosphoserine modification. Positions 870–897 (MFMERYQEVIQELSRVEHKIENQNSDGG) form a coiled coil. Positions 1272–1299 (LSTLSSPKPTGNSTLERKPHSSPRDSSL) are disordered. The segment covering 1273–1285 (STLSSPKPTGNST) has biased composition (polar residues). Phosphoserine occurs at positions 1744, 1765, 1784, and 1786. The segment at 1780–1812 (STIHSPSPRERSFPESQPPPEFVPPATPPGRPQ) is disordered. Over residues 1795–1810 (SQPPPEFVPPATPPGR) the composition is skewed to pro residues. Residues 1816–1876 (DESASICMVC…VCDQCYSYYN (61 aa)) form an FYVE-type zinc finger. Positions 1822, 1825, 1839, 1842, 1847, 1850, 1868, and 1871 each coordinate Zn(2+).

Belongs to the ZFYVE26 family. In terms of assembly, interacts with AP5Z1, AP5B1, AP5S1 and SPG11. Interacts with TTC19 and KIF13A.

Its subcellular location is the cytoplasm. It localises to the cytoskeleton. The protein localises to the microtubule organizing center. The protein resides in the centrosome. It is found in the midbody. Functionally, phosphatidylinositol 3-phosphate-binding protein required for the abscission step in cytokinesis: recruited to the midbody during cytokinesis and acts as a regulator of abscission. May also be required for efficient homologous recombination DNA double-strand break repair. This Ailuropoda melanoleuca (Giant panda) protein is Zinc finger FYVE domain-containing protein 26 (ZFYVE26).